Reading from the N-terminus, the 682-residue chain is Amphiphysin (682 aa).

Coiled-coil stretches lie at residues 10–84 (AKNV…LHEV) and 144–191 (DYDS…QEEL). Residues 24–240 (VLQKLGKADE…MTKLGDQHAD (217 aa)) form the BAR domain. Disordered regions lie at residues 244–310 (TIQG…PKLT), 446–470 (ILAE…ETTG), 501–530 (GAVR…QEKV), and 561–606 (AAAE…ASDM). Residues 261–274 (PSPPEEVSPLPSPT) show a composition bias toward pro residues. A compositionally biased stretch (basic and acidic residues) spans 503–527 (VRTEQEAAAEGDKPQGEEKDVDVSQ). Residues 567–596 (TQGTDSETSQIGSEQKATEEIQTTPSQDQP) show a composition bias toward polar residues. Positions 609–682 (GFLFKVEVLH…FPENFTRHLE (74 aa)) constitute an SH3 domain.

Heterodimer with BIN1. Binds SH3GLB1. Is abundant in the forebrain and cerebellum. It is also found in the adrenal gland, anterior and posterior pituitary.

Its subcellular location is the cytoplasmic vesicle. It is found in the secretory vesicle. It localises to the synaptic vesicle membrane. The protein localises to the cytoplasm. The protein resides in the cytoskeleton. May participate in mechanisms of regulated exocytosis in synapses and certain endocrine cell types. May control the properties of the membrane associated cytoskeleton. The sequence is that of Amphiphysin (AMPH) from Gallus gallus (Chicken).